Here is an 88-residue protein sequence, read N- to C-terminus: Co-chaperonin GroES (88 aa).

This sequence belongs to the GroES chaperonin family. In terms of assembly, heptamer of 7 subunits arranged in a ring. Interacts with the chaperonin GroEL.

It localises to the cytoplasm. Together with the chaperonin GroEL, plays an essential role in assisting protein folding. The GroEL-GroES system forms a nano-cage that allows encapsulation of the non-native substrate proteins and provides a physical environment optimized to promote and accelerate protein folding. GroES binds to the apical surface of the GroEL ring, thereby capping the opening of the GroEL channel. The sequence is that of Co-chaperonin GroES from Treponema pallidum (strain Nichols).